Reading from the N-terminus, the 468-residue chain is Cyclin-dependent kinase 14 (468 aa).

A phosphoserine mark is found at Ser24, Ser77, and Ser94. Positions 103 to 132 (KTSSAGKESPKVRRHSSPSSPTSPKFGKAD) are disordered. Residue Ser133 is modified to Phosphoserine. The Protein kinase domain maps to 134 to 418 (YEKLEKLGEG…AQAALSHEYF (285 aa)). Residues 140–148 (LGEGSYATV) and Lys163 contribute to the ATP site. Asp255 acts as the Proton acceptor in catalysis. The interval 448-468 (ESMRAFGKNNSYGKSLSNSKH) is disordered. Positions 455–468 (KNNSYGKSLSNSKH) are enriched in polar residues.

This sequence belongs to the protein kinase superfamily. CMGC Ser/Thr protein kinase family. CDC2/CDKX subfamily. Found in a complex with LRP6, CCNY and CAPRIN2 during G2/M stage; CAPRIN2 functions as a scaffold for the complex by binding to CCNY via its N terminus and to CDK14 via its C terminus. Interacts with CCNY; CCNY mediates its recruitment to the plasma membrane and promotes phosphorylation of LRP6. Interacts with CCDN3 and CDKN1A. Interacts with SEPT8. Interacts with 14-3-3 proteina YWHAB, YWHAE, YWHAH and YWHAQ.

It is found in the cell membrane. Its subcellular location is the cytoplasm. The protein localises to the nucleus. The catalysed reaction is L-seryl-[protein] + ATP = O-phospho-L-seryl-[protein] + ADP + H(+). It carries out the reaction L-threonyl-[protein] + ATP = O-phospho-L-threonyl-[protein] + ADP + H(+). Its activity is regulated as follows. Serine/threonine-protein kinase activity is promoted by associated cyclins CCDN3 and CCNY and repressed by CDKN1A. Its function is as follows. Serine/threonine-protein kinase involved in the control of the eukaryotic cell cycle, whose activity is controlled by an associated cyclin. Acts as a cell-cycle regulator of Wnt signaling pathway during G2/M phase by mediating the phosphorylation of LRP6 at 'Ser-1490', leading to the activation of the Wnt signaling pathway. Acts as a regulator of cell cycle progression and cell proliferation via its interaction with CCDN3. Phosphorylates RB1 in vitro, however the relevance of such result remains to be confirmed in vivo. May also play a role in meiosis, neuron differentiation and may indirectly act as a negative regulator of insulin-responsive glucose transport. The chain is Cyclin-dependent kinase 14 (CDK14) from Dasypus novemcinctus (Nine-banded armadillo).